Reading from the N-terminus, the 195-residue chain is MIIGVLSVQGGFVEHMRSIERLGHEARAVRRAEQLEGLDGLIMPGGESTTMSKLLELGGMLEPLRELIADGLPVFGTCAGLILLADRVLDTRSDAHSLHAMDITVRRNAFGRQVDSFETQLPFGDIDTPVEAVFIRAPKVEEVGDGVEVVSTLPDGTVVGVRQGNVLGCSFHPELSEDDRVHEYFLRMVKQRGVE.

46 to 48 (GES) contacts L-glutamine. Catalysis depends on Cys78, which acts as the Nucleophile. Residues Arg107 and 135-136 (IR) each bind L-glutamine. Catalysis depends on charge relay system residues His172 and Glu174.

Belongs to the glutaminase PdxT/SNO family. As to quaternary structure, in the presence of PdxS, forms a dodecamer of heterodimers. Only shows activity in the heterodimer.

The catalysed reaction is aldehydo-D-ribose 5-phosphate + D-glyceraldehyde 3-phosphate + L-glutamine = pyridoxal 5'-phosphate + L-glutamate + phosphate + 3 H2O + H(+). The enzyme catalyses L-glutamine + H2O = L-glutamate + NH4(+). It participates in cofactor biosynthesis; pyridoxal 5'-phosphate biosynthesis. Its function is as follows. Catalyzes the hydrolysis of glutamine to glutamate and ammonia as part of the biosynthesis of pyridoxal 5'-phosphate. The resulting ammonia molecule is channeled to the active site of PdxS. This Corynebacterium jeikeium (strain K411) protein is Pyridoxal 5'-phosphate synthase subunit PdxT.